The following is a 138-amino-acid chain: ATP synthase epsilon chain (138 aa).

Belongs to the ATPase epsilon chain family. In terms of assembly, F-type ATPases have 2 components, CF(1) - the catalytic core - and CF(0) - the membrane proton channel. CF(1) has five subunits: alpha(3), beta(3), gamma(1), delta(1), epsilon(1). CF(0) has three main subunits: a, b and c.

The protein resides in the cellular thylakoid membrane. In terms of biological role, produces ATP from ADP in the presence of a proton gradient across the membrane. This chain is ATP synthase epsilon chain (atpC), found in Synechococcus sp. (strain PCC 6716).